A 259-amino-acid chain; its full sequence is GTP cyclohydrolase FolE2 (259 aa).

Belongs to the GTP cyclohydrolase IV family.

It catalyses the reaction GTP + H2O = 7,8-dihydroneopterin 3'-triphosphate + formate + H(+). It functions in the pathway cofactor biosynthesis; 7,8-dihydroneopterin triphosphate biosynthesis; 7,8-dihydroneopterin triphosphate from GTP: step 1/1. Functionally, converts GTP to 7,8-dihydroneopterin triphosphate. This is GTP cyclohydrolase FolE2 from Thermosipho africanus (strain TCF52B).